Reading from the N-terminus, the 200-residue chain is Phospholipase A2 inhibitor gamma subunit A (200 aa).

The first 19 residues, 1 to 19 (MKSLHTICLLFIFIARGNS), serve as a signal peptide directing secretion. Cystine bridges form between cysteine 22–cysteine 46, cysteine 25–cysteine 32, cysteine 39–cysteine 67, cysteine 73–cysteine 94, cysteine 95–cysteine 100, cysteine 118–cysteine 143, cysteine 136–cysteine 165, and cysteine 169–cysteine 191. Asparagine 176 is a glycosylation site (N-linked (GlcNAc...) asparagine).

The protein belongs to the CNF-like-inhibitor family. As to quaternary structure, occurs as a mixture of oligomers. Tetrameric arrangement appears to be the predominant quaternary structure. Expressed by the liver.

The protein localises to the secreted. In terms of biological role, inhibits the enzymatic activity of phospholipase A2 (PA2). This is Phospholipase A2 inhibitor gamma subunit A from Gloydius brevicaudus siniticus (Chinese mamushi).